The following is a 333-amino-acid chain: Holliday junction branch migration complex subunit RuvB (333 aa).

A large ATPase domain (RuvB-L) region spans residues 1–182 (MDERLLSGES…FGVLSRLEYY (182 aa)). Residues Leu21, Arg22, Gly63, Lys66, Thr67, Thr68, 129–131 (EDF), Arg172, Tyr182, and Arg219 each bind ATP. Thr67 contacts Mg(2+). Residues 183–253 (TVDQLSAIVE…ITQMALELLQ (71 aa)) are small ATPAse domain (RuvB-S). Positions 256–333 (KLGLDHIDHK…EHFGMEIPKV (78 aa)) are head domain (RuvB-H). The DNA site is built by Arg311 and Arg316.

The protein belongs to the RuvB family. In terms of assembly, homohexamer. Forms an RuvA(8)-RuvB(12)-Holliday junction (HJ) complex. HJ DNA is sandwiched between 2 RuvA tetramers; dsDNA enters through RuvA and exits via RuvB. An RuvB hexamer assembles on each DNA strand where it exits the tetramer. Each RuvB hexamer is contacted by two RuvA subunits (via domain III) on 2 adjacent RuvB subunits; this complex drives branch migration. In the full resolvosome a probable DNA-RuvA(4)-RuvB(12)-RuvC(2) complex forms which resolves the HJ.

It localises to the cytoplasm. The catalysed reaction is ATP + H2O = ADP + phosphate + H(+). Functionally, the RuvA-RuvB-RuvC complex processes Holliday junction (HJ) DNA during genetic recombination and DNA repair, while the RuvA-RuvB complex plays an important role in the rescue of blocked DNA replication forks via replication fork reversal (RFR). RuvA specifically binds to HJ cruciform DNA, conferring on it an open structure. The RuvB hexamer acts as an ATP-dependent pump, pulling dsDNA into and through the RuvAB complex. RuvB forms 2 homohexamers on either side of HJ DNA bound by 1 or 2 RuvA tetramers; 4 subunits per hexamer contact DNA at a time. Coordinated motions by a converter formed by DNA-disengaged RuvB subunits stimulates ATP hydrolysis and nucleotide exchange. Immobilization of the converter enables RuvB to convert the ATP-contained energy into a lever motion, pulling 2 nucleotides of DNA out of the RuvA tetramer per ATP hydrolyzed, thus driving DNA branch migration. The RuvB motors rotate together with the DNA substrate, which together with the progressing nucleotide cycle form the mechanistic basis for DNA recombination by continuous HJ branch migration. Branch migration allows RuvC to scan DNA until it finds its consensus sequence, where it cleaves and resolves cruciform DNA. This Bacillus cereus (strain G9842) protein is Holliday junction branch migration complex subunit RuvB.